The primary structure comprises 420 residues: Gamma-glutamyl phosphate reductase (420 aa).

It belongs to the gamma-glutamyl phosphate reductase family.

Its subcellular location is the cytoplasm. The enzyme catalyses L-glutamate 5-semialdehyde + phosphate + NADP(+) = L-glutamyl 5-phosphate + NADPH + H(+). It participates in amino-acid biosynthesis; L-proline biosynthesis; L-glutamate 5-semialdehyde from L-glutamate: step 2/2. Catalyzes the NADPH-dependent reduction of L-glutamate 5-phosphate into L-glutamate 5-semialdehyde and phosphate. The product spontaneously undergoes cyclization to form 1-pyrroline-5-carboxylate. This Cereibacter sphaeroides (strain ATCC 17023 / DSM 158 / JCM 6121 / CCUG 31486 / LMG 2827 / NBRC 12203 / NCIMB 8253 / ATH 2.4.1.) (Rhodobacter sphaeroides) protein is Gamma-glutamyl phosphate reductase.